The following is a 55-amino-acid chain: Lantibiotic nisin-U (55 aa).

A propeptide spanning residues 1-24 (MNNEDFNLDLIKISKENNSGASPR) is cleaved from the precursor. At T26 the chain carries 2,3-didehydrobutyrine. Residues 27–31 (SKSLC) constitute a cross-link (lanthionine (Ser-Cys)). The residue at position 29 (S29) is a 2,3-didehydroalanine (Ser). 4 consecutive cross-links (beta-methyllanthionine (Thr-Cys)) follow at residues 32-35 (TPGC), 37-43 (TGILMTC), 47-50 (TATC), and 49-52 (TCGC). Residue T42 is modified to 2,3-didehydrobutyrine.

In terms of processing, maturation of lantibiotics involves the enzymatic conversion of Thr, and Ser into dehydrated AA and the formation of thioether bonds with cysteine. This is followed by membrane translocation and cleavage of the modified precursor.

Its subcellular location is the secreted. In terms of biological role, lanthionine-containing peptide antibiotic (lantibiotic) active on Gram-positive bacteria. The bactericidal activity of lantibiotics is based on depolarization of energized bacterial cytoplasmic membranes, initiated by the formation of aqueous transmembrane pores. In Streptococcus uberis, this protein is Lantibiotic nisin-U (nsuA).